We begin with the raw amino-acid sequence, 238 residues long: Flagellar L-ring protein (238 aa).

The signal sequence occupies residues 1 to 16; that stretch reads MRKLILISLCIFFLAS. Residue C17 is the site of N-palmitoyl cysteine attachment. The S-diacylglycerol cysteine moiety is linked to residue C17.

Belongs to the FlgH family. The basal body constitutes a major portion of the flagellar organelle and consists of four rings (L,P,S, and M) mounted on a central rod.

It is found in the cell outer membrane. It localises to the bacterial flagellum basal body. Its function is as follows. Assembles around the rod to form the L-ring and probably protects the motor/basal body from shearing forces during rotation. The sequence is that of Flagellar L-ring protein from Thermodesulfovibrio yellowstonii (strain ATCC 51303 / DSM 11347 / YP87).